The chain runs to 139 residues: Transcription antitermination protein NusB (139 aa).

Belongs to the NusB family.

In terms of biological role, involved in transcription antitermination. Required for transcription of ribosomal RNA (rRNA) genes. Binds specifically to the boxA antiterminator sequence of the ribosomal RNA (rrn) operons. In Baumannia cicadellinicola subsp. Homalodisca coagulata, this protein is Transcription antitermination protein NusB.